The primary structure comprises 284 residues: Probable 3-mercaptopyruvate sulfurtransferase (284 aa).

Rhodanese domains lie at 17–138 (SEPD…ALTN) and 168–281 (GQPG…RPVA). Residue arginine 182 coordinates substrate. Cysteine 241 serves as the catalytic Cysteine persulfide intermediate. A substrate specificity region spans residues 241-247 (CGSGVTA).

It is found in the cytoplasm. It catalyses the reaction 2-oxo-3-sulfanylpropanoate + [thioredoxin]-dithiol = [thioredoxin]-disulfide + hydrogen sulfide + pyruvate + H(+). Its function is as follows. Catalyzes the transfer of sulfur from 3-mercaptopyruvate to a thiol-containing acceptor to form an intramolecular disulfide releasing hydrogen sulfide and pyruvate. The chain is Probable 3-mercaptopyruvate sulfurtransferase (sseA) from Pseudomonas aeruginosa (strain ATCC 15692 / DSM 22644 / CIP 104116 / JCM 14847 / LMG 12228 / 1C / PRS 101 / PAO1).